A 110-amino-acid polypeptide reads, in one-letter code: B3 domain-containing protein LOC_Os02g10420 (110 aa).

The segment at residues 1–104 (MSAMLNENVP…VLSVTVHKAD (104 aa)) is a DNA-binding region (TF-B3).

It is found in the nucleus. The sequence is that of B3 domain-containing protein LOC_Os02g10420 from Oryza sativa subsp. japonica (Rice).